The chain runs to 139 residues: Large ribosomal subunit protein uL13 (139 aa).

Belongs to the universal ribosomal protein uL13 family. In terms of assembly, part of the 50S ribosomal subunit.

Its function is as follows. This protein is one of the early assembly proteins of the 50S ribosomal subunit, although it is not seen to bind rRNA by itself. It is important during the early stages of 50S assembly. In Wolinella succinogenes (strain ATCC 29543 / DSM 1740 / CCUG 13145 / JCM 31913 / LMG 7466 / NCTC 11488 / FDC 602W) (Vibrio succinogenes), this protein is Large ribosomal subunit protein uL13.